Reading from the N-terminus, the 444-residue chain is Glutamyl-tRNA reductase (444 aa).

Residues 49–52 (TCNR), Ser-109, 114–116 (ETQ), and Gln-120 each bind substrate. Cys-50 (nucleophile) is an active-site residue. 189–194 (GAGKMG) lines the NADP(+) pocket.

This sequence belongs to the glutamyl-tRNA reductase family. Homodimer.

The enzyme catalyses (S)-4-amino-5-oxopentanoate + tRNA(Glu) + NADP(+) = L-glutamyl-tRNA(Glu) + NADPH + H(+). It participates in porphyrin-containing compound metabolism; protoporphyrin-IX biosynthesis; 5-aminolevulinate from L-glutamyl-tRNA(Glu): step 1/2. Catalyzes the NADPH-dependent reduction of glutamyl-tRNA(Glu) to glutamate 1-semialdehyde (GSA). This is Glutamyl-tRNA reductase from Bacillus cereus (strain AH187).